The chain runs to 332 residues: Palmitoyltransferase ZDHHC15B (332 aa).

The Cytoplasmic portion of the chain corresponds to 1–14 (MALSRALRCCQRIF). A helical transmembrane segment spans residues 15–35 (SWIPVIIISSVVLWSYYAYVF). The Lumenal portion of the chain corresponds to 36–50 (ELCFVTLSNNLERVT). The helical transmembrane segment at 51–71 (YLLIFHVCFIMFCWTYWKAIF) threads the bilayer. The Cytoplasmic portion of the chain corresponds to 72–166 (TPPSTPTKKF…NNCVGFSNYK (95 aa)). The DHHC domain maps to 123-173 (RFCDRCQVIKPDRCHHCSVCETCVLKMDHHCPWVNNCVGFSNYKFFLLFLS). Residues cysteine 125 and cysteine 128 each contribute to the Zn(2+) site. Substrate is bound at residue lysine 132. Zn(2+)-binding residues include histidine 138, cysteine 139, cysteine 142, cysteine 145, and histidine 152. The S-palmitoyl cysteine intermediate role is filled by cysteine 153. Cysteine 159 is a Zn(2+) binding site. Residues 167–187 (FFLLFLSYSMIYCVFIASTVF) traverse the membrane as a helical segment. The Lumenal segment spans residues 188–204 (QYFLKFWVGDLPNGPAK). The helical transmembrane segment at 205–228 (FHVLFLLFVALMFFVSLMFLFGYH) threads the bilayer. Residues 229-332 (CWLVAKNRST…GSSLLIRTES (104 aa)) are Cytoplasmic-facing. The segment at 305-332 (EEKWVEDGGSDEESADENGSSLLIRTES) is disordered.

It belongs to the DHHC palmitoyltransferase family. Post-translationally, autopalmitoylated (in vitro).

The protein resides in the golgi apparatus membrane. Its subcellular location is the postsynaptic density. The enzyme catalyses L-cysteinyl-[protein] + hexadecanoyl-CoA = S-hexadecanoyl-L-cysteinyl-[protein] + CoA. It catalyses the reaction L-cysteinyl-[protein] + tetradecanoyl-CoA = S-tetradecanoyl-L-cysteinyl-[protein] + CoA. The catalysed reaction is L-cysteinyl-[protein] + octadecanoyl-CoA = S-octadecanoyl-L-cysteinyl-[protein] + CoA. In terms of biological role, palmitoyltransferase that catalyzes the addition of palmitate onto various protein substrates. Has no stringent fatty acid selectivity and in addition to palmitate can also transfer onto target proteins myristate from tetradecanoyl-CoA and stearate from octadecanoyl-CoA. May thereby regulate target proteins association and localization to membranes. In the nervous system, probably catalyzes the palmitoylation of synaptic proteins and is involved in the differentiation of dopaminergic neurons and the development of the diencephalon. This is Palmitoyltransferase ZDHHC15B (zdhhc15b) from Danio rerio (Zebrafish).